The sequence spans 569 residues: Isocitrate dehydrogenase kinase/phosphatase (569 aa).

Residues 316 to 322 (APGVRGM) and Lys-337 each bind ATP. Asp-372 is an active-site residue.

The protein belongs to the AceK family.

The protein resides in the cytoplasm. The catalysed reaction is L-seryl-[isocitrate dehydrogenase] + ATP = O-phospho-L-seryl-[isocitrate dehydrogenase] + ADP + H(+). Its function is as follows. Bifunctional enzyme which can phosphorylate or dephosphorylate isocitrate dehydrogenase (IDH) on a specific serine residue. This is a regulatory mechanism which enables bacteria to bypass the Krebs cycle via the glyoxylate shunt in response to the source of carbon. When bacteria are grown on glucose, IDH is fully active and unphosphorylated, but when grown on acetate or ethanol, the activity of IDH declines drastically concomitant with its phosphorylation. This is Isocitrate dehydrogenase kinase/phosphatase from Pseudomonas putida (strain W619).